The following is a 190-amino-acid chain: NADH dehydrogenase [ubiquinone] iron-sulfur protein 3 (190 aa).

This sequence belongs to the complex I 30 kDa subunit family. In terms of assembly, complex I is composed of at least 49 different subunits. This is a component of the iron-sulfur (IP) fragment of the enzyme.

The protein resides in the mitochondrion inner membrane. It carries out the reaction a ubiquinone + NADH + 5 H(+)(in) = a ubiquinol + NAD(+) + 4 H(+)(out). Core subunit of the mitochondrial membrane respiratory chain NADH dehydrogenase (Complex I) that is believed to belong to the minimal assembly required for catalysis. Complex I functions in the transfer of electrons from NADH to the respiratory chain. The immediate electron acceptor for the enzyme is believed to be ubiquinone. The protein is NADH dehydrogenase [ubiquinone] iron-sulfur protein 3 (NAD9) of Arabidopsis thaliana (Mouse-ear cress).